The sequence spans 444 residues: MLRNDTITAIATPPGEGSIAIVRVSGPDAISISDRIFSGNIAGYASHTAHLGTVSHNAVYIDQALVLVMRAPRSFTGEDIVEFQCHGGYFACSQIVNTLLAEGARAALPGEFSQRAFLNGKIDLIQAEAIQQLIAADNIDAFRIAQNQFQGHTSQAISSISSLIIEALAYIEVLADFPEEDIETEDSLPKHRIMEALSITDELLSSFDEGQRLAQGTSIVLAGLPNAGKSSILNALTQKNRAIVTDIPGTTRDILEENWVLQGKNLRLIDSAGLRETENLVEKEGIARAREAMSQAEGILWVVDASQPLPEFPTILYQKPTILLWNKCDIVSPPQIEVPFQQISVSAKTGEGLLELKQALQKWLNTTQLGKSSKIFLVSARHHSLLHSVYTCLTAALNGFTEHLPNECIALDLRQALHSIGNLSGSEVTENVLGEIFSKFCIGK.

Positions 23, 82, and 121 each coordinate (6S)-5-formyl-5,6,7,8-tetrahydrofolate. One can recognise a TrmE-type G domain in the interval 216–365 (GTSIVLAGLP…LKQALQKWLN (150 aa)). Asparagine 226 is a K(+) binding site. Residues 226–231 (NAGKSS), 245–251 (TDIPGTT), and 270–273 (DSAG) contribute to the GTP site. Serine 230 lines the Mg(2+) pocket. Threonine 245, isoleucine 247, and threonine 250 together coordinate K(+). Threonine 251 contributes to the Mg(2+) binding site. A (6S)-5-formyl-5,6,7,8-tetrahydrofolate-binding site is contributed by lysine 444.

Belongs to the TRAFAC class TrmE-Era-EngA-EngB-Septin-like GTPase superfamily. TrmE GTPase family. In terms of assembly, homodimer. Heterotetramer of two MnmE and two MnmG subunits. The cofactor is K(+).

The protein resides in the cytoplasm. In terms of biological role, exhibits a very high intrinsic GTPase hydrolysis rate. Involved in the addition of a carboxymethylaminomethyl (cmnm) group at the wobble position (U34) of certain tRNAs, forming tRNA-cmnm(5)s(2)U34. This is tRNA modification GTPase MnmE from Chlamydia trachomatis serovar A (strain ATCC VR-571B / DSM 19440 / HAR-13).